A 592-amino-acid chain; its full sequence is uncharacterized protein (592 aa).

A signal peptide spans 1–23 (MRKAPLLRFTLASLALACSQAFA). The active-site Nucleophile is Ser-37. Catalysis depends on residues Asp-294 and His-297. The region spanning 334 to 592 (HQDELRNQWQ…PDPGEPGGKP (259 aa)) is the Autotransporter domain. The tract at residues 572-592 (FTLTGYTPHTAPDPGEPGGKP) is disordered.

The protein belongs to the 'GDSL' lipolytic enzyme family.

This is an uncharacterized protein from Pseudomonas putida (Arthrobacter siderocapsulatus).